The following is a 313-amino-acid chain: 3'-5' exoribonuclease YhaM (313 aa).

The HD domain occupies 163–279 (HVVSMLRLAK…LHQIDLMDAS (117 aa)).

This sequence belongs to the YhaM family.

In terms of biological role, shows a 3'-5' exoribonuclease activity. The protein is 3'-5' exoribonuclease YhaM of Listeria welshimeri serovar 6b (strain ATCC 35897 / DSM 20650 / CCUG 15529 / CIP 8149 / NCTC 11857 / SLCC 5334 / V8).